A 513-amino-acid chain; its full sequence is Ribonuclease Y (513 aa).

The chain crosses the membrane as a helical span at residues tyrosine 6–aspartate 26. Residues threonine 203–valine 288 enclose the KH domain. The HD domain maps to valine 329–alanine 422.

Belongs to the RNase Y family.

It is found in the cell membrane. In terms of biological role, endoribonuclease that initiates mRNA decay. The chain is Ribonuclease Y from Clostridium botulinum (strain Langeland / NCTC 10281 / Type F).